Here is a 313-residue protein sequence, read N- to C-terminus: 3'-5' exoribonuclease YhaM (313 aa).

The 117-residue stretch at 163–279 (HVVSMLRLAK…LHQIDLMDAS (117 aa)) folds into the HD domain.

It belongs to the YhaM family.

Functionally, shows a 3'-5' exoribonuclease activity. The chain is 3'-5' exoribonuclease YhaM from Listeria welshimeri serovar 6b (strain ATCC 35897 / DSM 20650 / CCUG 15529 / CIP 8149 / NCTC 11857 / SLCC 5334 / V8).